Consider the following 493-residue polypeptide: Dipeptide permease D (493 aa).

Topologically, residues 1–13 (MNKHASQPRAIYY) are cytoplasmic. The helical transmembrane segment at 14–34 (VVALQIWEYFSFYGMRALLIL) threads the bilayer. The Periplasmic portion of the chain corresponds to 35–48 (YLTNQLKYNDTHAY). A helical membrane pass occupies residues 49 to 69 (ELFSAYCSLVYVTPILGGFLA). The Cytoplasmic segment spans residues 70-77 (DKVLGNRM). The helical transmembrane segment at 78 to 98 (AVMLGALLMAIGHVVLGASEI) threads the bilayer. Topologically, residues 99–100 (HP) are periplasmic. Residues 101–121 (SFLYLSLAIIVCGYGLFKSNV) traverse the membrane as a helical segment. Residues 122–137 (SCLLGELYEPTDPRRD) lie on the Cytoplasmic side of the membrane. The helical transmembrane segment at 138–158 (GGFSLMYAAGNVGSIIAPIAC) threads the bilayer. Residues 159–166 (GYAQEEYS) lie on the Periplasmic side of the membrane. A helical transmembrane segment spans residues 167–187 (WAMGFGLAAVGMIAGLVIFLC). Residues 188–211 (GNRHFTHTRGVNKKVLRATNFLLP) lie on the Cytoplasmic side of the membrane. A helical transmembrane segment spans residues 212 to 232 (NWGWLLVLLVATPALITVLFW). Residues 233-234 (KE) lie on the Periplasmic side of the membrane. The chain crosses the membrane as a helical span at residues 235–255 (WSVYALIVATIIGLGVLAKIY). Residues 256–268 (RKAENQKQRKELR) are Cytoplasmic-facing. Residues 269 to 289 (LIVTLTFFSMLFWAFAQQGGS) form a helical membrane-spanning segment. Over 290–311 (SISLYIDRFVNRDMFGYTVPTA) the chain is Periplasmic. Residues 312–332 (MFQSINAFAVMLCGVFLAWVV) form a helical membrane-spanning segment. Residues 333 to 343 (KESVAGNRTVR) are Cytoplasmic-facing. The helical transmembrane segment at 344 to 364 (IWGKFALGLGLMSAGFCILTL) threads the bilayer. Residues 365–378 (SARWSAMYGHSSLP) lie on the Periplasmic side of the membrane. The helical transmembrane segment at 379–399 (LMVLGLAVMGFAELFIDPVAM) threads the bilayer. Residues 400-412 (SQITRIEIPGVTG) lie on the Cytoplasmic side of the membrane. The chain crosses the membrane as a helical span at residues 413-433 (VLTGIYMLLSGAIANYLAGVI). Topologically, residues 434–461 (ADQTSQASFDASGAINYSINAYIEVFDQ) are periplasmic. Residues 462–482 (ITWGALACVGVVLMIWLYQAL) traverse the membrane as a helical segment. Topologically, residues 483-493 (KFRNRALALES) are cytoplasmic.

The protein belongs to the major facilitator superfamily. Proton-dependent oligopeptide transporter (POT/PTR) (TC 2.A.17) family. DtpD subfamily. As to quaternary structure, monomer in solution. Exhibits a doughnut-like shape with a central, shallow depression and has a diameter of 8 nm.

Its subcellular location is the cell inner membrane. Functionally, probable proton-dependent permease that transports dipeptides. The polypeptide is Dipeptide permease D (dtpD) (Escherichia coli O157:H7).